Reading from the N-terminus, the 423-residue chain is Glucose-6-phosphate isomerase (423 aa).

Residue E279 is the Proton donor of the active site. Residues H300 and K413 contribute to the active site.

The protein belongs to the GPI family.

The protein localises to the cytoplasm. The catalysed reaction is alpha-D-glucose 6-phosphate = beta-D-fructose 6-phosphate. The protein operates within carbohydrate biosynthesis; gluconeogenesis. It participates in carbohydrate degradation; glycolysis; D-glyceraldehyde 3-phosphate and glycerone phosphate from D-glucose: step 2/4. Catalyzes the reversible isomerization of glucose-6-phosphate to fructose-6-phosphate. This is Glucose-6-phosphate isomerase from Acholeplasma laidlawii (strain PG-8A).